The chain runs to 496 residues: Cytochrome P450 71AV8 (496 aa).

Residues 3-23 (ISIPTTLGLAVIIFIIFKLLT) traverse the membrane as a helical segment. Heme is bound at residue Cys432.

Belongs to the cytochrome P450 family. Heme serves as cofactor.

It localises to the membrane. Functionally, valencene oxidase, which preferentially hydroylates the C2 position of (+)-valencene in the trans-orientation, producing trans-nootkatol that can be further oxidized to (+)-nootkatone. Can also catalyze the three-step conversion of germacrene A to germacra-1(10),4,11(13)-trien-12-oic acid and the partial conversion of the non-natural substrate amorpha-4,11-diene into artemisinic alcohol and artemisinic aldehyde. The chain is Cytochrome P450 71AV8 (CYP71AV8) from Cichorium intybus (Chicory).